Here is a 490-residue protein sequence, read N- to C-terminus: UDP-N-acetylmuramoylalanine--D-glutamate ligase (490 aa).

124–130 contacts ATP; it reads GTNGKTT.

It belongs to the MurCDEF family.

It localises to the cytoplasm. The catalysed reaction is UDP-N-acetyl-alpha-D-muramoyl-L-alanine + D-glutamate + ATP = UDP-N-acetyl-alpha-D-muramoyl-L-alanyl-D-glutamate + ADP + phosphate + H(+). The protein operates within cell wall biogenesis; peptidoglycan biosynthesis. In terms of biological role, cell wall formation. Catalyzes the addition of glutamate to the nucleotide precursor UDP-N-acetylmuramoyl-L-alanine (UMA). This Mycobacterium leprae (strain TN) protein is UDP-N-acetylmuramoylalanine--D-glutamate ligase (murD).